Reading from the N-terminus, the 933-residue chain is uncharacterized protein (933 aa).

The span at 1 to 28 (MNGNLPHIQIQSPKNSLDHLNNGRQATH) shows a compositional bias: polar residues. Disordered stretches follow at residues 1–135 (MNGN…GESD), 173–194 (MDNE…NAAD), and 252–275 (ATDF…ADAQ). The segment covering 29-47 (NFEHGKPGDREEANGHADA) has biased composition (basic and acidic residues). The segment covering 49 to 59 (SSSGRSRYLSS) has biased composition (low complexity). Polar residues-rich tracts occupy residues 87–101 (TLSF…SNTH) and 108–135 (NRSS…GESD). Acidic residues predominate over residues 173–182 (MDNESSEEER). The segment covering 264-275 (EPSSSRHTADAQ) has biased composition (polar residues). WD repeat units lie at residues 314-353 (SSNN…HARS), 385-423 (GHTA…CLCC), 425-465 (EHSD…VSFW), 467-506 (ELPE…FRTQ), 517-563 (AKGS…LELK), 568-607 (ANAQ…MHKT), 617-657 (ASVR…SVIS), and 665-710 (PSLR…AARK). At serine 722 the chain carries Phosphoserine. Positions 756–796 (NASQITNNENNGNDDIKKGDEPEEEHVGLRKNSTQEKNANL) are disordered. A compositionally biased stretch (polar residues) spans 757–768 (ASQITNNENNGN). Residues 769-783 (DDIKKGDEPEEEHVG) show a composition bias toward basic and acidic residues.

It is found in the endoplasmic reticulum. The protein localises to the nucleus. This is an uncharacterized protein from Schizosaccharomyces pombe (strain 972 / ATCC 24843) (Fission yeast).